Consider the following 94-residue polypeptide: uncharacterized protein (94 aa).

Expressed in heart.

This is an uncharacterized protein from Homo sapiens (Human).